The sequence spans 334 residues: Deoxyhypusine synthase (334 aa).

NAD(+) is bound by residues 73–77 (SNIIS), 99–101 (TGG), Glu-105, and Asp-207. Residue 104 to 105 (EE) coordinates spermidine. Residues Asp-212 and His-256 each coordinate spermidine. 276–277 (NA) serves as a coordination point for NAD(+). Residues 282–284 (GSD) and 291–297 (EAVSWGK) contribute to the spermidine site. Lys-297 acts as the Nucleophile in catalysis. 310–311 (DA) contributes to the NAD(+) binding site.

The protein belongs to the deoxyhypusine synthase family. NAD(+) is required as a cofactor.

The catalysed reaction is [eIF5A protein]-L-lysine + spermidine = [eIF5A protein]-deoxyhypusine + propane-1,3-diamine. The protein operates within protein modification; eIF5A hypusination. Its function is as follows. Catalyzes the NAD-dependent oxidative cleavage of spermidine and the subsequent transfer of the butylamine moiety of spermidine to the epsilon-amino group of a specific lysine residue of the eIF-5A precursor protein to form the intermediate deoxyhypusine residue. The polypeptide is Deoxyhypusine synthase (DYS1) (Encephalitozoon cuniculi (strain GB-M1) (Microsporidian parasite)).